Here is a 289-residue protein sequence, read N- to C-terminus: Glycerol facilitator-aquaporin gla (289 aa).

2 helical membrane-spanning segments follow: residues 10 to 30 (ITEF…VANV) and 41 to 61 (SWMI…VAFG). Residues 68–70 (NPA) carry the NPA 1 motif. Helical transmembrane passes span 87 to 107 (AQYI…IVMV), 151 to 171 (FLGS…FFGS), and 209 to 229 (MIAH…LGGP). An NPA 2 motif is present at residues 235 to 237 (NPA). A helical transmembrane segment spans residues 264 to 284 (WYAWVPVLAPILASLAAVALF).

It belongs to the MIP/aquaporin (TC 1.A.8) family.

The protein localises to the cell membrane. Mixed channel protein that transports both water and glycerol. The chain is Glycerol facilitator-aquaporin gla (gla) from Lactococcus lactis subsp. cremoris (Streptococcus cremoris).